We begin with the raw amino-acid sequence, 279 residues long: Proteasome subunit beta 2 (279 aa).

The propeptide at 1-53 is removed in mature form; by autocatalysis; the sequence is MAAAFDPSGRFPDLFTSVGTSSFSAFLSKAAPELLPGRRPLPPGMATGLTPHA. Catalysis depends on T54, which acts as the Nucleophile.

This sequence belongs to the peptidase T1B family. In terms of assembly, the 20S proteasome core is composed of 14 alpha and 14 beta subunits that assemble into four stacked heptameric rings, resulting in a barrel-shaped structure. The two inner rings, each composed of seven catalytic beta subunits, are sandwiched by two outer rings, each composed of seven alpha subunits. The catalytic chamber with the active sites is on the inside of the barrel. Has a gated structure, the ends of the cylinder being occluded by the N-termini of the alpha-subunits. Is capped by the proteasome-associated ATPase, ARC.

It localises to the cytoplasm. It catalyses the reaction Cleavage of peptide bonds with very broad specificity.. The protein operates within protein degradation; proteasomal Pup-dependent pathway. The formation of the proteasomal ATPase ARC-20S proteasome complex, likely via the docking of the C-termini of ARC into the intersubunit pockets in the alpha-rings, may trigger opening of the gate for substrate entry. Interconversion between the open-gate and close-gate conformations leads to a dynamic regulation of the 20S proteasome proteolysis activity. Functionally, component of the proteasome core, a large protease complex with broad specificity involved in protein degradation. The sequence is that of Proteasome subunit beta 2 from Salinispora tropica (strain ATCC BAA-916 / DSM 44818 / JCM 13857 / NBRC 105044 / CNB-440).